A 618-amino-acid chain; its full sequence is Serine/threonine-protein kinase TNNI3K (618 aa).

A lipid anchor (N-myristoyl glycine) is attached at Gly-2. The stretch at 21 to 51 (SESYVITIERLEDDLKIKEKELTELRNIFGS) forms a coiled coil. ANK repeat units lie at residues 66–96 (NGLSLLHLCCICGGNKSHIRTLMLKGLRPSR), 100–129 (NGFTALHLAVYKDNAELITSLLHGGADIQQ), 133–162 (GGLTALHIATIAGHLEAADVLLQHGANVNI), 166–195 (VFFTPLHIAAYYGHEQVTRLLLKFGADVNV), 199–228 (VGDRPLHLASAKGFLNIAKLLMEEGSKADV), 234–263 (EDHVPLHFCSRFGHHDIVKYLLQNDLEVQP), 269–298 (YGDTPLHLACYNGKFEVAKEIIQISGTESL), 304–335 (FSETAFHSACTYGKSIDLVKFLLDQNVININH), 339–368 (DGHTGLHSACYHGHIHLVQFLLDNGADMNL), and 381–410 (DEQTCLMWAYEKGHDAIVTLLKHYKRPQDE). The Protein kinase domain maps to 463–618 (IEFHEIIGSG…TAHTIYLLAP (156 aa)). Residues 469–477 (IGSGSFGKV) and Lys-490 contribute to the ATP site. Asp-588 acts as the Proton acceptor in catalysis.

Belongs to the protein kinase superfamily. TKL Ser/Thr protein kinase family. MAP kinase kinase kinase subfamily. Interacts with TNNI3, ACTC, ACTA1, MYBPC3, AIP, FABP3 and HADHB. Mg(2+) serves as cofactor. Post-translationally, autophosphorylated.

It is found in the nucleus. The protein localises to the cytoplasm. It carries out the reaction L-seryl-[protein] + ATP = O-phospho-L-seryl-[protein] + ADP + H(+). The catalysed reaction is L-threonyl-[protein] + ATP = O-phospho-L-threonyl-[protein] + ADP + H(+). Its function is as follows. May play a role in cardiac physiology. This Pongo abelii (Sumatran orangutan) protein is Serine/threonine-protein kinase TNNI3K.